Here is a 617-residue protein sequence, read N- to C-terminus: COMPASS component cclA (617 aa).

2 stretches are compositionally biased toward low complexity: residues 1–19 (MASI…INSP) and 40–50 (SSPAPASNASA). The tract at residues 1–89 (MASIQPAGSS…AKKRATAVQN (89 aa)) is disordered. The span at 57-69 (SKRNKRDSRKKRE) shows a compositional bias: basic residues. The 224-residue stretch at 157 to 380 (IADTSFPHIK…YAFNLKETPT (224 aa)) folds into the B30.2/SPRY domain. Residues 595 to 617 (TPNTEEPAARPENITVGHDVEMS) form a disordered region.

This sequence belongs to the cclA family. In terms of assembly, component of the COMPASS complex.

The protein localises to the nucleus. It localises to the chromosome. Its subcellular location is the telomere. Its function is as follows. Component of the COMPASS (Set1C) complex that specifically mono-, di- and trimethylates histone H3 to form H3K4me1/2/3, which subsequently plays a role in telomere length maintenance and transcription elongation regulation. Controls the production of several secondary metabolites, including astellolides. The protein is COMPASS component cclA of Aspergillus oryzae (strain ATCC 42149 / RIB 40) (Yellow koji mold).